Here is a 290-residue protein sequence, read N- to C-terminus: Malonyl-[acyl-carrier protein] O-methyltransferase (290 aa).

Belongs to the methyltransferase superfamily.

The catalysed reaction is malonyl-[ACP] + S-adenosyl-L-methionine = malonyl-[ACP] methyl ester + S-adenosyl-L-homocysteine. It participates in cofactor biosynthesis; biotin biosynthesis. Functionally, converts the free carboxyl group of a malonyl-thioester to its methyl ester by transfer of a methyl group from S-adenosyl-L-methionine (SAM). It allows to synthesize pimeloyl-ACP via the fatty acid synthetic pathway. This Gallionella capsiferriformans (strain ES-2) (Gallionella ferruginea capsiferriformans (strain ES-2)) protein is Malonyl-[acyl-carrier protein] O-methyltransferase.